Reading from the N-terminus, the 133-residue chain is Small ribosomal subunit protein uS9 (133 aa).

The segment at 101-133 is disordered; it reads MKPKGLLTRDPREVERKKYGLKKARRAPQFSKR. Over residues 107–118 the composition is skewed to basic and acidic residues; it reads LTRDPREVERKK. Residues 119 to 133 show a composition bias toward basic residues; the sequence is YGLKKARRAPQFSKR.

Belongs to the universal ribosomal protein uS9 family.

The sequence is that of Small ribosomal subunit protein uS9 from Deinococcus radiodurans (strain ATCC 13939 / DSM 20539 / JCM 16871 / CCUG 27074 / LMG 4051 / NBRC 15346 / NCIMB 9279 / VKM B-1422 / R1).